The sequence spans 576 residues: Alpha-1,3-arabinosyltransferase XAT3 (576 aa).

Residues 1–19 lie on the Cytoplasmic side of the membrane; sequence MKAGERPKLVRGVRQESRR. Residues 20–40 form a helical; Signal-anchor for type II membrane protein membrane-spanning segment; the sequence is FRLLVIVVGFFLVSLTFVFVS. Residues 41–576 lie on the Lumenal side of the membrane; it reads KPDAILFSLN…LLEALDNLNP (536 aa). Residues 64 to 171 are disordered; the sequence is IQQKVNEPSG…KHKVTLPTVS (108 aa). Composition is skewed to basic and acidic residues over residues 73–98, 126–138, and 147–163; these read GESR…DAKP, THNK…KSHQ, and GESK…EQKH. Asn172, Asn375, and Asn443 each carry an N-linked (GlcNAc...) asparagine glycan.

Belongs to the glycosyltransferase 61 family.

Its subcellular location is the golgi apparatus membrane. It participates in glycan metabolism. Glycosyltransferase involved in the arabinosylation of xylan, the major hemicellulose (non-cellulosic component) of primary and secondary walls of angiosperms. Possesses alpha-1,3-arabinosyltransferase activity, transferring an arabinofuranose residue to the xylan backbone. This is Alpha-1,3-arabinosyltransferase XAT3 from Oryza sativa subsp. japonica (Rice).